The chain runs to 206 residues: Ras-related protein Rab7 (206 aa).

GTP is bound by residues 15–22, 63–67, and 125–128; these read GDTGVGKT, DTAGQ, and NKID. S-geranylgeranyl cysteine attachment occurs at residues C204 and C206. C206 bears the Cysteine methyl ester mark.

The protein belongs to the small GTPase superfamily. Rab family.

It is found in the cell membrane. Functionally, protein transport. Probably involved in vesicular traffic. The polypeptide is Ras-related protein Rab7 (Vigna aconitifolia (Moth bean)).